The chain runs to 88 residues: UPF0298 protein BC_3932 (88 aa).

This sequence belongs to the UPF0298 family.

The protein localises to the cytoplasm. The sequence is that of UPF0298 protein BC_3932 from Bacillus cereus (strain ATCC 14579 / DSM 31 / CCUG 7414 / JCM 2152 / NBRC 15305 / NCIMB 9373 / NCTC 2599 / NRRL B-3711).